Here is a 507-residue protein sequence, read N- to C-terminus: Histidine ammonia-lyase (507 aa).

The 5-imidazolinone (Ala-Gly) cross-link spans 141–143 (ASG). A 2,3-didehydroalanine (Ser) modification is found at serine 142.

The protein belongs to the PAL/histidase family. In terms of processing, contains an active site 4-methylidene-imidazol-5-one (MIO), which is formed autocatalytically by cyclization and dehydration of residues Ala-Ser-Gly.

Its subcellular location is the cytoplasm. It catalyses the reaction L-histidine = trans-urocanate + NH4(+). It participates in amino-acid degradation; L-histidine degradation into L-glutamate; N-formimidoyl-L-glutamate from L-histidine: step 1/3. The sequence is that of Histidine ammonia-lyase from Burkholderia vietnamiensis (strain G4 / LMG 22486) (Burkholderia cepacia (strain R1808)).